The sequence spans 969 residues: Isoleucine--tRNA ligase (969 aa).

A 'HIGH' region motif is present at residues 68 to 78; sequence PYANGNLHMGH. Glutamate 584 is an L-isoleucyl-5'-AMP binding site. The 'KMSKS' region signature appears at 625 to 629; the sequence is KMSKS. Lysine 628 contributes to the ATP binding site. Zn(2+)-binding residues include cysteine 938, cysteine 941, cysteine 958, and cysteine 961.

The protein belongs to the class-I aminoacyl-tRNA synthetase family. IleS type 1 subfamily. In terms of assembly, monomer. The cofactor is Zn(2+).

The protein resides in the cytoplasm. It catalyses the reaction tRNA(Ile) + L-isoleucine + ATP = L-isoleucyl-tRNA(Ile) + AMP + diphosphate. In terms of biological role, catalyzes the attachment of isoleucine to tRNA(Ile). As IleRS can inadvertently accommodate and process structurally similar amino acids such as valine, to avoid such errors it has two additional distinct tRNA(Ile)-dependent editing activities. One activity is designated as 'pretransfer' editing and involves the hydrolysis of activated Val-AMP. The other activity is designated 'posttransfer' editing and involves deacylation of mischarged Val-tRNA(Ile). The sequence is that of Isoleucine--tRNA ligase from Prochlorococcus marinus (strain SARG / CCMP1375 / SS120).